A 594-amino-acid chain; its full sequence is Chondroitin sulfate proteoglycan 5 (594 aa).

Residues 1-12 are compositionally biased toward polar residues; it reads MGVGGTSASDTA. A signal peptide spans 1-18; that stretch reads MGVGGTSASDTALSLCPT. Disordered stretches follow at residues 1-325 and 343-418; these read MGVG…PWGL and TTSF…SECR. Residues 19–481 are Extracellular-facing; sequence APEWPPRNGS…AIVTDFQVLC (463 aa). Asparagine 26 and asparagine 44 each carry an N-linked (GlcNAc...) asparagine glycan. A compositionally biased stretch (low complexity) spans 140–181; sequence SPGLGLSSPGPNLGLPSLDLPNPNLGLPDPNLGLPNPSLGLP. Composition is skewed to pro residues over residues 182 to 195 and 219 to 229; these read SPGP…PNPN and IPLPSPSPGPG. Low complexity predominate over residues 248 to 259; it reads PQPSSSPAPAQR. Gly residues predominate over residues 298–310; that stretch reads GGHGPGGGHGAGG. Residues 338-377 form an interaction with TNC and TNR region; sequence ADFYPTTSFYAEGDDDAEEELEEDEEEEEEEDGGLEDENG. Residues 349–375 are compositionally biased toward acidic residues; it reads EGDDDAEEELEEDEEEEEEEDGGLEDE. 2 N-linked (GlcNAc...) asparagine glycosylation sites follow: asparagine 413 and asparagine 425. The EGF-like domain maps to 429-471; the sequence is RSVCDLVPSYCHNGGQCYLVESHGAFCRCNTQDYTWHKGTRCE. Intrachain disulfides connect cysteine 432-cysteine 445, cysteine 439-cysteine 455, and cysteine 457-cysteine 470. The helical transmembrane segment at 482–502 threads the bilayer; sequence VAVGSAALVLLLLFMLTVFFA. Residues 503-594 are Cytoplasmic-facing; sequence KKLYLLKTEN…GVPCLHNNLG (92 aa). The disordered stretch occupies residues 535–594; it reads TIAEGSHPNDDPGAPHKLQDPLKPGLKDEEPLSILSTAPEEGSKGEPGGCGVPCLHNNLG. Residues 541–564 are compositionally biased toward basic and acidic residues; it reads HPNDDPGAPHKLQDPLKPGLKDEE.

As to quaternary structure, binds TNC and TNR. The 80 kDa form but not the 140 kDa form can bind TNC and TNR when expressed at the cell surface. In terms of processing, different forms exist: the 140 kDa form (also reported as 130 kDa), which probably consists of the entire protein, and the 38 and 80 kDa forms, which are probably cleaved in their N-terminus. Increase in synaptic activity, results in shedding of the extracellular domain and expression at the cell surface of a 38 kDa form. A form of 200 kDa has also been reported, which is probably hyperglycosylated. Post-translationally, N-glycosylated. O-glycosylated; contains chondroitin sulfate glycans. Part-time proteoglycan, the 200 kDa form is the only one containing chondroitin sulfate glycans. Expressed in astroglial and neuronal surfaces in different parts of the embryonic brain. Expressed in adult brain and retina (at protein level).

It localises to the cell membrane. Its function is as follows. May function as a growth and differentiation factor involved in neuritogenesis and more particularly in neurite extension. This chain is Chondroitin sulfate proteoglycan 5 (CSPG5), found in Gallus gallus (Chicken).